The sequence spans 274 residues: 2,3,4,5-tetrahydropyridine-2,6-dicarboxylate N-succinyltransferase (274 aa).

Substrate is bound by residues Arg-104 and Asp-141.

Belongs to the transferase hexapeptide repeat family. As to quaternary structure, homotrimer.

It is found in the cytoplasm. It catalyses the reaction (S)-2,3,4,5-tetrahydrodipicolinate + succinyl-CoA + H2O = (S)-2-succinylamino-6-oxoheptanedioate + CoA. The protein operates within amino-acid biosynthesis; L-lysine biosynthesis via DAP pathway; LL-2,6-diaminopimelate from (S)-tetrahydrodipicolinate (succinylase route): step 1/3. The sequence is that of 2,3,4,5-tetrahydropyridine-2,6-dicarboxylate N-succinyltransferase from Shewanella loihica (strain ATCC BAA-1088 / PV-4).